Consider the following 577-residue polypeptide: Arginine--tRNA ligase (577 aa).

A 'HIGH' region motif is present at residues 122 to 132; the sequence is PNVAKEMHVGH.

It belongs to the class-I aminoacyl-tRNA synthetase family. In terms of assembly, monomer.

Its subcellular location is the cytoplasm. The catalysed reaction is tRNA(Arg) + L-arginine + ATP = L-arginyl-tRNA(Arg) + AMP + diphosphate. In Edwardsiella ictaluri (strain 93-146), this protein is Arginine--tRNA ligase.